The following is an 86-amino-acid chain: Large ribosomal subunit protein bL27 (86 aa).

Residues 1–10 (MAQKKGGGST) show a composition bias toward gly residues. A disordered region spans residues 1–20 (MAQKKGGGSTRNGRDSESKR).

Belongs to the bacterial ribosomal protein bL27 family.

The chain is Large ribosomal subunit protein bL27 from Polynucleobacter necessarius subsp. necessarius (strain STIR1).